The chain runs to 396 residues: Cytochrome P450 121 (396 aa).

Position 345 (Cys-345) interacts with heme.

It belongs to the cytochrome P450 family. Heme is required as a cofactor.

It is found in the cytoplasm. This chain is Cytochrome P450 121 (cyp121), found in Mycobacterium bovis (strain ATCC BAA-935 / AF2122/97).